The sequence spans 227 residues: ATP-dependent dethiobiotin synthetase BioD (227 aa).

13–18 (DIGKTY) contributes to the ATP binding site. A Mg(2+)-binding site is contributed by Thr17. The active site involves Lys38. Residue Ser42 coordinates substrate. Residues Asp55, 116 to 119 (EGSG), and 179 to 180 (NN) each bind ATP. The Mg(2+) site is built by Asp55 and Glu116.

It belongs to the dethiobiotin synthetase family. In terms of assembly, homodimer. Mg(2+) serves as cofactor.

The protein resides in the cytoplasm. It catalyses the reaction (7R,8S)-7,8-diammoniononanoate + CO2 + ATP = (4R,5S)-dethiobiotin + ADP + phosphate + 3 H(+). It participates in cofactor biosynthesis; biotin biosynthesis; biotin from 7,8-diaminononanoate: step 1/2. Catalyzes a mechanistically unusual reaction, the ATP-dependent insertion of CO2 between the N7 and N8 nitrogen atoms of 7,8-diaminopelargonic acid (DAPA, also called 7,8-diammoniononanoate) to form a ureido ring. In Clostridium botulinum (strain 657 / Type Ba4), this protein is ATP-dependent dethiobiotin synthetase BioD.